A 138-amino-acid chain; its full sequence is MAKEYSRTQRIGDQMQRELAQLIRREIKDPRVGLVTITAVDVSRDVGHAKIFMTVMGQDNAEDIAQTIKVLNAAAGFLRMQLAREMKLRSVPQLHFHYDESVVRGAHLSALIERAVAQDSQHQEGPASPDAKPESTEE.

Residues 116–138 are disordered; it reads VAQDSQHQEGPASPDAKPESTEE.

Belongs to the RbfA family. In terms of assembly, monomer. Binds 30S ribosomal subunits, but not 50S ribosomal subunits or 70S ribosomes.

It localises to the cytoplasm. In terms of biological role, one of several proteins that assist in the late maturation steps of the functional core of the 30S ribosomal subunit. Associates with free 30S ribosomal subunits (but not with 30S subunits that are part of 70S ribosomes or polysomes). Required for efficient processing of 16S rRNA. May interact with the 5'-terminal helix region of 16S rRNA. This chain is Ribosome-binding factor A, found in Pseudomonas syringae pv. tomato (strain ATCC BAA-871 / DC3000).